The sequence spans 1654 residues: Cortactin-binding protein 2 (1654 aa).

Positions 1 to 31 (MATDGASCEPDFSRSPEDAAGATAEPAKKEF) are disordered. Residues 119-276 (RKMQERMSTQ…EQLKRGSDSK (158 aa)) are a coiled coil. Disordered stretches follow at residues 361–432 (SHGD…LHSP), 455–480 (GNANDPDQNGNTSQSPPSRDVSPTSR), and 495–596 (QALS…PQGN). Residues 368-379 (SSVPAAPTPSAS) show a composition bias toward low complexity. Composition is skewed to polar residues over residues 384-395 (NGPSTGSAPDPT) and 411-422 (QTPGTAAQSYSQ). Arginine 499 bears the Asymmetric dimethylarginine mark. Positions 518–531 (DVSSHTPVSRTSLK) are enriched in polar residues. ANK repeat units follow at residues 710-740 (GRPTLLQQAAAQGNVTLLSMLLNEEGLDINY), 744-773 (DGHSALYSAAKNGHTDCVRLLLNAQAQVNA), 777-806 (NGFTPLCAAAAQGHFKCIELLIANDANINH), 810-839 (GGQTPLYLACKNGNNECIKLLLGAGSDRSV), 843-872 (DGWTPVHAAVDTGNVDNLKLLMYYEAPIPG), and 913-943 (EGWTAAHIAASKGFKNCLEILCRHRGLEPER). A disordered region spans residues 1454 to 1478 (GAWRKVSTSPRKKSGHFSSPVWNKP). At serine 1523 the chain carries Phosphoserine. The interval 1556-1654 (RRLHSSGNNP…KEEIWNLRKK (99 aa)) is disordered. Residues 1581–1598 (KEVSPLSSHQTTECSNNK) show a composition bias toward polar residues. A compositionally biased stretch (low complexity) spans 1623-1637 (SQNTKRSSSSSNTRQ). Basic and acidic residues predominate over residues 1644 to 1654 (SKEEIWNLRKK).

In terms of assembly, interacts with CTTN/cortactin SH3 domain. Interacts with STRN, STRN4/zinedin and MOB4/phocein; this interactions mediate the association with the STRIPAK core complex and may regulate dendritic spine distribution of the STRIPAK complex in hippocampal neurons. Activation of glutamate receptors weakens the interaction with STRN and STRN4.

It is found in the cytoplasm. It localises to the cell cortex. Its subcellular location is the cell projection. The protein localises to the dendritic spine. Its function is as follows. Regulates the dendritic spine distribution of CTTN/cortactin in hippocampal neurons, and thus controls dendritic spinogenesis and dendritic spine maintenance. Associates with the striatin-interacting phosphatase and kinase (STRIPAK) core complex to regulate dendritic spine distribution of the STRIPAK complex in hippocampal neurons. This Atelerix albiventris (Middle-African hedgehog) protein is Cortactin-binding protein 2 (CTTNBP2).